A 61-amino-acid chain; its full sequence is U-poneritoxin(01)-Om5a (61 aa).

An N-terminal signal peptide occupies residues 1-23 (MKLSALSLAFAIILMMTIMYTKA). Positions 24-41 (DADASADAEADADAEAEA) are excised as a propeptide. Q59 carries the glutamine amide modification.

This sequence belongs to the formicidae venom precursor-01 superfamily. Post-translationally, truncated sequences of this peptide have also been found in the venom. It is possible they have been cleaved in the venom. Expressed by the venom gland.

It localises to the secreted. Functionally, acidic peptide with potent hemolytic activities (94.8% at 50 uM). It also shows low antimicrobial activities against E.coli (MIC=50uM), as well as histamine-releasing activity (28.3% at 10 uM). Does not have activity against S.aureus, and S.cerevisiae. The polypeptide is U-poneritoxin(01)-Om5a (Odontomachus monticola (Trap-jaw ant)).